The primary structure comprises 336 residues: Anthranilate phosphoribosyltransferase (336 aa).

Residues Gly80, 83 to 84, Thr88, 90 to 93, 108 to 116, and Ser120 each bind 5-phospho-alpha-D-ribose 1-diphosphate; these read GD, NIST, and KHGNRSITS. Gly80 serves as a coordination point for anthranilate. Ser92 contributes to the Mg(2+) binding site. An anthranilate-binding site is contributed by Asn111. Position 166 (Arg166) interacts with anthranilate. Positions 224 and 225 each coordinate Mg(2+).

It belongs to the anthranilate phosphoribosyltransferase family. In terms of assembly, homodimer. Requires Mg(2+) as cofactor.

The catalysed reaction is N-(5-phospho-beta-D-ribosyl)anthranilate + diphosphate = 5-phospho-alpha-D-ribose 1-diphosphate + anthranilate. The protein operates within amino-acid biosynthesis; L-tryptophan biosynthesis; L-tryptophan from chorismate: step 2/5. In terms of biological role, catalyzes the transfer of the phosphoribosyl group of 5-phosphorylribose-1-pyrophosphate (PRPP) to anthranilate to yield N-(5'-phosphoribosyl)-anthranilate (PRA). The chain is Anthranilate phosphoribosyltransferase from Caldicellulosiruptor saccharolyticus (strain ATCC 43494 / DSM 8903 / Tp8T 6331).